The following is a 297-amino-acid chain: 4-hydroxy-tetrahydrodipicolinate synthase (297 aa).

T49 is a binding site for pyruvate. Y137 (proton donor/acceptor) is an active-site residue. K166 functions as the Schiff-base intermediate with substrate in the catalytic mechanism. Pyruvate is bound at residue I208.

This sequence belongs to the DapA family. Homotetramer; dimer of dimers.

It localises to the cytoplasm. It carries out the reaction L-aspartate 4-semialdehyde + pyruvate = (2S,4S)-4-hydroxy-2,3,4,5-tetrahydrodipicolinate + H2O + H(+). It participates in amino-acid biosynthesis; L-lysine biosynthesis via DAP pathway; (S)-tetrahydrodipicolinate from L-aspartate: step 3/4. Catalyzes the condensation of (S)-aspartate-beta-semialdehyde [(S)-ASA] and pyruvate to 4-hydroxy-tetrahydrodipicolinate (HTPA). This Parabacteroides distasonis (strain ATCC 8503 / DSM 20701 / CIP 104284 / JCM 5825 / NCTC 11152) protein is 4-hydroxy-tetrahydrodipicolinate synthase.